The primary structure comprises 342 residues: MDMKQALNRIASNLDLSRDEMKDVMRIVMNGEATDAQIGAFLMGLRLKSETIDEITGATEVMRELATGVTVNAEPLVDIVGTGGDGANLFNVSSAASFVVAAAGGYVAKHGNRGVSSKSGSADLIEKAGINLNMKPEEVARCVEQIGVGFMFAPAHHGAMKHAIGPRRELGCRTIFNILGPMTNPAGVTRQLIGVFTRELCRPMAEVLQRLGAEHIMVVCSKDGLDEISLATVTHVAELKDGEITEYDLTPEDLGIKSQSLVGLSVDGADESLALIKAAFGRSHDETTEKARDMIALNAGAAIYVAGLARTAKEGVDMALDAMGSGLAAGKMSELADFSQCF.

5-phospho-alpha-D-ribose 1-diphosphate contacts are provided by residues G81, 84-85, 91-94, 109-117, and S121; these read GD, NVSS, and KHGNRGVSS. G81 contacts anthranilate. S93 lines the Mg(2+) pocket. N112 is an anthranilate binding site. R167 provides a ligand contact to anthranilate. Mg(2+) contacts are provided by D226 and E227.

It belongs to the anthranilate phosphoribosyltransferase family. As to quaternary structure, homodimer. It depends on Mg(2+) as a cofactor.

The enzyme catalyses N-(5-phospho-beta-D-ribosyl)anthranilate + diphosphate = 5-phospho-alpha-D-ribose 1-diphosphate + anthranilate. It participates in amino-acid biosynthesis; L-tryptophan biosynthesis; L-tryptophan from chorismate: step 2/5. Its function is as follows. Catalyzes the transfer of the phosphoribosyl group of 5-phosphorylribose-1-pyrophosphate (PRPP) to anthranilate to yield N-(5'-phosphoribosyl)-anthranilate (PRA). In Marinobacter nauticus (strain ATCC 700491 / DSM 11845 / VT8) (Marinobacter aquaeolei), this protein is Anthranilate phosphoribosyltransferase.